Here is a 250-residue protein sequence, read N- to C-terminus: 7-carboxy-7-deazaguanine synthase (250 aa).

Residues 15–17 (VQG) and Arg-30 contribute to the substrate site. A Radical SAM core domain is found at 21–250 (LIGLRQVFIR…PQTHRFMGQL (230 aa)). Positions 34, 38, and 41 each coordinate [4Fe-4S] cluster. A Mg(2+)-binding site is contributed by Thr-43. Substrate is bound at residue Thr-96. Gly-98 lines the S-adenosyl-L-methionine pocket.

The protein belongs to the radical SAM superfamily. 7-carboxy-7-deazaguanine synthase family. Homodimer. The cofactor is [4Fe-4S] cluster. S-adenosyl-L-methionine serves as cofactor. Mg(2+) is required as a cofactor.

It catalyses the reaction 6-carboxy-5,6,7,8-tetrahydropterin + H(+) = 7-carboxy-7-deazaguanine + NH4(+). Its pathway is purine metabolism; 7-cyano-7-deazaguanine biosynthesis. Its function is as follows. Catalyzes the complex heterocyclic radical-mediated conversion of 6-carboxy-5,6,7,8-tetrahydropterin (CPH4) to 7-carboxy-7-deazaguanine (CDG), a step common to the biosynthetic pathways of all 7-deazapurine-containing compounds. This is 7-carboxy-7-deazaguanine synthase from Geobacter sulfurreducens (strain ATCC 51573 / DSM 12127 / PCA).